The chain runs to 212 residues: Tetraspanin-31-B (212 aa).

The Cytoplasmic segment spans residues M1–A12. The chain crosses the membrane as a helical span at residues L13 to W33. Topologically, residues G34 to H44 are extracellular. A helical membrane pass occupies residues I45 to I65. Residues G66–Q72 lie on the Cytoplasmic side of the membrane. The helical transmembrane segment at V73 to S93 threads the bilayer. Over C94–K175 the chain is Extracellular. 4 N-linked (GlcNAc...) asparagine glycosylation sites follow: N100, N109, N117, and N134. The chain crosses the membrane as a helical span at residues I176 to F196. Topologically, residues R197–L212 are cytoplasmic.

Belongs to the tetraspanin (TM4SF) family.

Its subcellular location is the membrane. This Xenopus laevis (African clawed frog) protein is Tetraspanin-31-B (tspan31-b).